The sequence spans 457 residues: Paired box protein Pax-8 (457 aa).

A DNA-binding region (paired) is located at residues 9-135 (GHGGLNQLGG…SSINRIIRTK (127 aa)). The interval 12-68 (GLNQLGGAFVNGRPLPEVVRQRIVDLAHQGVRPCDISRQLRVSHGCVSKILGRYYET) is PAI subdomain. The RED subdomain stretch occupies residues 87-135 (KVVEKIGDYKRQNPTMFAWEIRDRLLAEGVCDNDTVPSVSSINRIIRTK). Residues 159 to 182 (LIPSSAVTPPESPQSDSLGSTYSI) are compositionally biased toward polar residues. Residues 159 to 226 (LIPSSAVTPP…SSGPRKHLRT (68 aa)) are disordered. Residue Ser304 is modified to Phosphoserine.

As to quaternary structure, interacts with WWTR1.

Its subcellular location is the nucleus. In terms of biological role, thought to encode a transcription factor. It may have a role in kidney cell differentiation. May play a regulatory role in mammalian development. The chain is Paired box protein Pax-8 (Pax8) from Rattus norvegicus (Rat).